The chain runs to 69 residues: Alpha-conotoxin Mr1.7a (69 aa).

A signal peptide spans 1–21 (MGMRMMFTVFLLVVLATTVVS). Residues 22-49 (FTSNRVLDPAFRRRNAAAKASDLIALNA) constitute a propeptide that is removed on maturation. 2 positions are modified to 4-hydroxyproline; in Mr1.7b: Pro52 and Pro58. 2 cysteine pairs are disulfide-bonded: Cys54–Cys60 and Cys55–Cys68. Residues 56–58 (THP) are lacks the Ser-Xaa-Pro motif that is crucial for potent interaction with nAChR. Cys68 carries the cysteine amide modification.

The protein belongs to the conotoxin A superfamily. Post-translationally, two 4-hydroxyprolines have been detected by MS but the assignment of which of the three prolines is modified is uncertain. As to expression, expressed by the venom duct.

The protein resides in the secreted. In terms of biological role, acts as a co-agonist with PNU (an alpha-7 nAChR-selective allosteric modulator) at the endogenous alpha-7/CHRNA7 nicotinic acetylcholine receptors (nAChR) when tested in human SH-SY5Y neuroblastoma cells. Is the third alpha-conotoxin that acts as an agonist (after alpha-conotoxin SrIA/SrIB). Also acts as an antagonist at human alpha-7 nAChRs heterologously expressed in Xenopus oocytes. Has possibly a distinct nAChR binding mode from other alpha-conotoxins, due to a different three residue motif (lacks the Ser-Xaa-Pro motif). Its function is as follows. Acts as a weak partial agonist at alpha-7/CHRNA7 nicotinic acetylcholine receptors (nAChR) when tested in human SH-SY5Y neuroblastoma cells. Has possibly a distinct nAChR binding mode from other alpha-conotoxins, due to a different three residue motif (lacks the Ser-Xaa-Pro motif). The chain is Alpha-conotoxin Mr1.7a from Conus marmoreus (Marble cone).